The primary structure comprises 399 residues: Tryptophan synthase beta chain (399 aa).

Lys90 is subject to N6-(pyridoxal phosphate)lysine.

Belongs to the TrpB family. As to quaternary structure, tetramer of two alpha and two beta chains. The cofactor is pyridoxal 5'-phosphate.

The catalysed reaction is (1S,2R)-1-C-(indol-3-yl)glycerol 3-phosphate + L-serine = D-glyceraldehyde 3-phosphate + L-tryptophan + H2O. Its pathway is amino-acid biosynthesis; L-tryptophan biosynthesis; L-tryptophan from chorismate: step 5/5. Its function is as follows. The beta subunit is responsible for the synthesis of L-tryptophan from indole and L-serine. This chain is Tryptophan synthase beta chain, found in Bacillus pumilus (strain SAFR-032).